A 592-amino-acid chain; its full sequence is A-type ATP synthase subunit A (592 aa).

ATP is bound at residue 234–241 (GGFGTGKT).

The protein belongs to the ATPase alpha/beta chains family. Has multiple subunits with at least A(3), B(3), C, D, E, F, H, I and proteolipid K(x).

It is found in the cell membrane. It carries out the reaction ATP + H2O + 4 H(+)(in) = ADP + phosphate + 5 H(+)(out). In terms of biological role, component of the A-type ATP synthase that produces ATP from ADP in the presence of a proton gradient across the membrane. The A chain is the catalytic subunit. This Cenarchaeum symbiosum (strain A) protein is A-type ATP synthase subunit A.